Here is a 256-residue protein sequence, read N- to C-terminus: Acetyl-coenzyme A carboxylase carboxyl transferase subunit alpha (256 aa).

The CoA carboxyltransferase C-terminal domain maps to 1 to 236 (MTKITRIVRE…KQELLVELEQ (236 aa)).

Belongs to the AccA family. In terms of assembly, acetyl-CoA carboxylase is a heterohexamer composed of biotin carboxyl carrier protein (AccB), biotin carboxylase (AccC) and two subunits each of ACCase subunit alpha (AccA) and ACCase subunit beta (AccD).

The protein resides in the cytoplasm. It catalyses the reaction N(6)-carboxybiotinyl-L-lysyl-[protein] + acetyl-CoA = N(6)-biotinyl-L-lysyl-[protein] + malonyl-CoA. The protein operates within lipid metabolism; malonyl-CoA biosynthesis; malonyl-CoA from acetyl-CoA: step 1/1. Functionally, component of the acetyl coenzyme A carboxylase (ACC) complex. First, biotin carboxylase catalyzes the carboxylation of biotin on its carrier protein (BCCP) and then the CO(2) group is transferred by the carboxyltransferase to acetyl-CoA to form malonyl-CoA. The sequence is that of Acetyl-coenzyme A carboxylase carboxyl transferase subunit alpha from Streptococcus gordonii (strain Challis / ATCC 35105 / BCRC 15272 / CH1 / DL1 / V288).